Here is a 380-residue protein sequence, read N- to C-terminus: Histidinol-phosphate aminotransferase (380 aa).

At Lys-235 the chain carries N6-(pyridoxal phosphate)lysine.

The protein belongs to the class-II pyridoxal-phosphate-dependent aminotransferase family. Histidinol-phosphate aminotransferase subfamily. As to quaternary structure, homodimer. It depends on pyridoxal 5'-phosphate as a cofactor.

The catalysed reaction is L-histidinol phosphate + 2-oxoglutarate = 3-(imidazol-4-yl)-2-oxopropyl phosphate + L-glutamate. The protein operates within amino-acid biosynthesis; L-histidine biosynthesis; L-histidine from 5-phospho-alpha-D-ribose 1-diphosphate: step 7/9. In Rhodococcus opacus (strain B4), this protein is Histidinol-phosphate aminotransferase.